The sequence spans 389 residues: Na(+)/H(+) antiporter NhaA (389 aa).

The next 11 helical transmembrane spans lie at 17–37, 59–79, 95–115, 124–144, 154–174, 177–197, 213–233, 261–281, 287–307, 328–348, and 363–383; these read ILLL…LAGL, LLLW…GLEV, SLPT…YLLF, AGWA…MALL, VFLL…IALF, TDLS…LVAL, LVLW…GVII, FLIL…NMSL, PVPV…VMLF, IAPV…IASL, and LGTL…LSKV.

This sequence belongs to the NhaA Na(+)/H(+) (TC 2.A.33) antiporter family.

Its subcellular location is the cell inner membrane. It catalyses the reaction Na(+)(in) + 2 H(+)(out) = Na(+)(out) + 2 H(+)(in). Na(+)/H(+) antiporter that extrudes sodium in exchange for external protons. This chain is Na(+)/H(+) antiporter NhaA, found in Shewanella sp. (strain MR-4).